We begin with the raw amino-acid sequence, 506 residues long: ATP synthase subunit alpha (506 aa).

Residue 172–179 (GDRKTGKT) coordinates ATP.

The protein belongs to the ATPase alpha/beta chains family. F-type ATPases have 2 components, CF(1) - the catalytic core - and CF(0) - the membrane proton channel. CF(1) has five subunits: alpha(3), beta(3), gamma(1), delta(1), epsilon(1). CF(0) has three main subunits: a(1), b(2) and c(9-12). The alpha and beta chains form an alternating ring which encloses part of the gamma chain. CF(1) is attached to CF(0) by a central stalk formed by the gamma and epsilon chains, while a peripheral stalk is formed by the delta and b chains.

Its subcellular location is the cell membrane. It carries out the reaction ATP + H2O + 4 H(+)(in) = ADP + phosphate + 5 H(+)(out). In terms of biological role, produces ATP from ADP in the presence of a proton gradient across the membrane. The alpha chain is a regulatory subunit. The chain is ATP synthase subunit alpha from Lactobacillus gasseri (strain ATCC 33323 / DSM 20243 / BCRC 14619 / CIP 102991 / JCM 1131 / KCTC 3163 / NCIMB 11718 / NCTC 13722 / AM63).